The primary structure comprises 592 residues: A-type ATP synthase subunit A (592 aa).

Gly-234–Thr-241 provides a ligand contact to ATP.

Belongs to the ATPase alpha/beta chains family. As to quaternary structure, has multiple subunits with at least A(3), B(3), C, D, E, F, H, I and proteolipid K(x).

Its subcellular location is the cell membrane. The catalysed reaction is ATP + H2O + 4 H(+)(in) = ADP + phosphate + 5 H(+)(out). In terms of biological role, component of the A-type ATP synthase that produces ATP from ADP in the presence of a proton gradient across the membrane. The A chain is the catalytic subunit. In Cenarchaeum symbiosum (strain A), this protein is A-type ATP synthase subunit A.